The following is a 312-amino-acid chain: MPRLSEPSPYVEFDRKQWRALRMSTPLALTEEELIGLRGLGEQIDLLEVEEVYLPLARLIHLQVAARQRLFAATAEFLGEPQQNPGRPVPFIIGVAGSVAVGKSTTARVLQALLARWDHHTRVDLVTTDGFLYPNAELGRRNLMHRKGFPESYNRRALMRFVTSVKSGADYACAPVYSHLRYDTIPGAKHVVRHPDILILEGLNVLQTGPTLMVSDLFDFSLYVDARIQDIEQWYVSRFLAMRGTAFADPESHFHHYSALTDSKAIIAAREIWRSINRPNLVENILPTRPRATLVLRKDADHSINRLRLRKL.

97-104 is an ATP binding site; the sequence is GSVAVGKS.

It belongs to the prokaryotic pantothenate kinase family.

Its subcellular location is the cytoplasm. It catalyses the reaction (R)-pantothenate + ATP = (R)-4'-phosphopantothenate + ADP + H(+). It functions in the pathway cofactor biosynthesis; coenzyme A biosynthesis; CoA from (R)-pantothenate: step 1/5. The polypeptide is Pantothenate kinase (coaA) (Mycobacterium leprae (strain TN)).